A 165-amino-acid chain; its full sequence is MVNPGSSSQPPPVTAGSLSWKRCAGCGGKIADRFLLYAMDSYWHSRCLKCSCCQAQLGDIGTSCYTKSGMILCRNDYIRLFGNSGACSACGQSIPASELVMRAQGNVYHLKCFTCSTCRNRLVPGDRFHYINGSLFCEHDRPTALINGHLNSLQSNPLLPDQKVC.

2 LIM zinc-binding domains span residues 23 to 83 (CAGC…LFGN) and 87 to 147 (CSAC…ALIN).

Interacts strongly with LDBS. Interacts with LDB2 and LDB1. Interaction with complexes consisting of at least LDB1 and LHX3 acts to disassemble the complex; may preferentially disassemble LDB1-LHX3 complexes rather than complexes consisting of LDB1, LHX3 and ISL1. Interacts (via the LIM zinc-binding domain 1) with RBBP8. Interacts with both RPPB8 and LDB1 through the same face and cannot bind to both proteins simultaneously. Interacts with BRCA1 (via the BRCT domains); the interaction represses BRCA1 transcriptional activity. Interacts with DEAF1; LMO4 blocks export from nucleus.

In terms of biological role, transcription cofactor. Plays a role in establishing motor neuron identity, in concert with MNX1, acting, at least in part, to disrupt LDB1-LHX3 complexes thereby negatively modulating interneuron genes in motor neurons. The protein is LIM domain transcription factor LMO4 (LMO4) of Bos taurus (Bovine).